Here is a 314-residue protein sequence, read N- to C-terminus: Versiconal hemiacetal acetate esterase (314 aa).

Residues 85-87 (HGG) carry the Involved in the stabilization of the negatively charged intermediate by the formation of the oxyanion hole motif. Residues serine 154, aspartate 255, and histidine 285 contribute to the active site.

Belongs to the 'GDXG' lipolytic enzyme family.

The catalysed reaction is (2S,3S)-versiconal hemiacetal acetate + H2O = (2S-3S)-versiconal hemiacetal + acetate + H(+). The enzyme catalyses (3S)-versiconol acetate + H2O = (S)-versiconol + acetate + H(+). It participates in mycotoxin biosynthesis; aflatoxin biosynthesis. Its function is as follows. Versiconal hemiacetal acetate esterase; part of the gene cluster that mediates the biosynthesis of aflatoxins, a group of polyketide-derived furanocoumarins, and part of the most toxic and carcinogenic compounds among the known mycotoxins. The four major aflatoxins produced by A.parasiticus are aflatoxin B1 (AFB1), aflatoxin B2 (AFB2), aflatoxin G1 (AFG1) and aflatoxin G2 (AFG2). Within the aflatoxin pathway, the versiconal hemiacetal acetate esterase aflJ converts versiconal hemiacetal acetate (VHA) into versiconal (VAL). The biosynthesis of aflatoxins begins with the norsolorinic acid synthase aflC that combines a hexanoyl starter unit produced by the fatty acid synthase aflA/aflB and 7 malonyl-CoA extender units to synthesize the precursor NOR. The second step is the conversion of NOR to averantin and requires the norsolorinic acid ketoreductase aflD, which catalyzes the dehydration of norsolorinic acid to form (1'S)-averantin. The norsolorinic acid reductases aflE and aflF may also play a role in the conversion of NOR to AVN. The cytochrome P450 monooxygenase aflG then catalyzes the hydroxylation of AVN to 5'hydroxyaverantin (HAVN). The next step is performed by the 5'-hydroxyaverantin dehydrogenase aflH that transforms HAVN to 5'-oxoaverantin (OAVN) which is further converted to averufin (AVF) by aflK that plays a dual role in the pathway, as a 5'-oxoaverantin cyclase that mediates conversion of 5'-oxoaverantin, as well as a versicolorin B synthase in a later step in the pathway. The averufin oxidase aflI catalyzes the conversion of AVF to versiconal hemiacetal acetate (VHA). VHA is then the substrate for the versiconal hemiacetal acetate esterase aflJ to yield versiconal (VAL). Versicolorin B synthase aflK then converts VAL to versicolorin B (VERB) by closing the bisfuran ring of aflatoxin which is required for DNA-binding, thus giving to aflatoxin its activity as a mutagen. Then, the activity of the versicolorin B desaturase aflL leads to versicolorin A (VERA). A branch point starts from VERB since it can also be converted to dihydrodemethylsterigmatocystin (DMDHST), probably also by aflL, VERA being a precursor for aflatoxins B1 and G1, and DMDHST for aflatoxins B2 and G2. Next, the versicolorin reductase aflM and the cytochrome P450 monooxygenase aflN are involved in conversion of VERA to demethylsterigmatocystin (DMST). AflX and aflY seem also involved in this step, through probable aflX-mediated epoxide ring-opening step following versicolorin A oxidation and aflY-mediated Baeyer-Villiger oxidation required for the formation of the xanthone ring. The methyltransferase aflO then leads to the modification of DMST to sterigmatocystin (ST), and of DMDHST to dihydrosterigmatocystin (DHST). Both ST and DHST are then substrates of the O-methyltransferase aflP to yield O-methylsterigmatocystin (OMST) and dihydro-O-methylsterigmatocystin (DHOMST), respectively. Finally OMST is converted to aflatoxins B1 and G1, and DHOMST to aflatoxins B2 and G2, via the action of several enzymes including O-methylsterigmatocystin oxidoreductase aflQ, the cytochrome P450 monooxygenase aflU, but also the NADH-dependent flavin oxidoreductase nadA which is specifically required for the synthesis of AFG1. In Aspergillus parasiticus (strain ATCC 56775 / NRRL 5862 / SRRC 143 / SU-1), this protein is Versiconal hemiacetal acetate esterase.